The sequence spans 64 residues: Large ribosomal subunit protein bL35 (64 aa).

Belongs to the bacterial ribosomal protein bL35 family.

The protein is Large ribosomal subunit protein bL35 of Pseudomonas putida (strain W619).